Consider the following 257-residue polypeptide: Snake venom serine protease KN8 (257 aa).

The first 18 residues, 1–18, serve as a signal peptide directing secretion; that stretch reads MVLIRVLANLLILQLSYA. A propeptide spanning residues 19–24 is cleaved from the precursor; sequence QKSSEL. Residues 25–248 form the Peptidase S1 domain; that stretch reads VVGGLPCNIN…HLDWIKSIIA (224 aa). 5 disulfide bridges follow: Cys-31/Cys-162, Cys-49/Cys-65, Cys-141/Cys-209, Cys-173/Cys-188, and Cys-199/Cys-224. Residue His-64 is the Charge relay system of the active site. N-linked (GlcNAc...) asparagine glycosylation occurs at Asn-102. Catalysis depends on Asp-109, which acts as the Charge relay system. 2 N-linked (GlcNAc...) asparagine glycosylation sites follow: Asn-120 and Asn-121. Ser-203 acts as the Charge relay system in catalysis.

It belongs to the peptidase S1 family. Snake venom subfamily. In terms of assembly, monomer. Expressed by the venom gland.

The protein resides in the secreted. Its function is as follows. Snake venom serine protease that may act in the hemostasis system of the prey. This is Snake venom serine protease KN8 from Trimeresurus stejnegeri (Chinese green tree viper).